Reading from the N-terminus, the 94-residue chain is Venom peptide SjAPI (94 aa).

Residues 1–24 (MKWGALLCIFGFLAFCSVLDRGLG) form the signal peptide. Positions 25–30 (WIPDIW) are excised as a propeptide. 5 disulfides stabilise this stretch: C33–C70, C43–C66, C47–C62, C51–C92, and C72–C86. Positions 33–92 (CSSKNEEFQQCGSSCPETCANHKNPEPKSCAAVCFVGCVCKPGFIRDDLKGSICVKPEDC) constitute a TIL domain. The segment at 63 to 65 (AAV) is protease binding loop.

Belongs to the serine protease inhibitor-like (TIL domain-containing) family. In terms of tissue distribution, expressed by the venom gland.

The protein resides in the secreted. Its function is as follows. Recombinant protein inhibits both alpha-chymotrypsin (Ki=97.1 nM) and elastase (Ki=3700 nM). The protein is Venom peptide SjAPI of Scorpiops jendeki (Scorpion).